We begin with the raw amino-acid sequence, 261 residues long: Small ribosomal subunit protein eS1 (261 aa).

A compositionally biased stretch (basic residues) spans 1–18; sequence MAVGKNKRISKGKKGGKK. The segment at 1–20 is disordered; that stretch reads MAVGKNKRISKGKKGGKKKA.

It belongs to the eukaryotic ribosomal protein eS1 family. In terms of assembly, component of the small ribosomal subunit. Mature ribosomes consist of a small (40S) and a large (60S) subunit. The 40S subunit contains about 33 different proteins and 1 molecule of RNA (18S). The 60S subunit contains about 49 different proteins and 3 molecules of RNA (25S, 5.8S and 5S).

It is found in the cytoplasm. The chain is Small ribosomal subunit protein eS1 from Catharanthus roseus (Madagascar periwinkle).